The following is a 1456-amino-acid chain: MLSASQFLKHRVSCLPMLNKVESDSTDGDPDDACQHPHDCNIFSVLVNGATDRLEGFFDESDEEDGDEVETPSTTTTAVSPSATMSAPSPTATAPTPHSGTHTPKSPLHSISHCPSFNSVAQALPHSLSPHSLCHTSSHEASRRGSAEQPSRTQSELARRIKTENILNSFHDSLEAAYEKCHGGANPEEHQSNKTEYFQQKLKGFAALDVDEQLIADYPVWLLKNVLIQGHLYITAKHMCFLSYLPRRQNANIRSGTLVKARKRSLREGTRYWCVLKNDSFSYYPDSTDVYFPAGTIDLSEALAAELCDDEGDVTEPESFRIVMPKKSVLFKADSHSAAHEWVKALQKEIFRAHNQGDTVRIVIPLQNIVDLEKTKIFEFATTIKTSVVESNETYAIDEYIFTFFKFGDDVLRTLTENGVEISGGNFSPRQSQLAVGHKHVTESVRDSTLLHASGHHHHFFHSAHHESDGKSNSKSHTSSRSHTPRNLTPQVTGEQPHERDEKRDSKLPRLPKFLRRFKDKVDDKCDDKPTLVPSFLKSRASSRRNSAEGSDRPNLASQRTSSSTLFPSAPPTPGSQPTTPGVHAPGSSTPGGSYGTTTPGTPASADSVSLAGTPGVAAPVGDIEGLNGNPMPAGIAAELKEKRKSGGATSSGAATGATTPGGAAAPGSTGNSSPGTPGGLGGPGAVGAGGPGVMGGAESAPAGTVPQQSHHAGISVVAPHDPAAAAAAADAAAPFTRGPGSGIPEIQDDSDSSDDDHWGHIGTAEVDEDPEQDTFKKKNKRFSTLSKVSDLWSGSTKHYGKHHTERLGDDDDKHLASAEEITESNERFQKRFALGTEERLIASYHCHLHRGGIPTYGKMYVSTNYVTFRSFLRTKTLMIVPLKVVENATKDSGFKFGYSGLVLTIQGYEEIFFEFASASHRDDAEVMLLRQLDIIRPHINDDIKSDDQYMLQSARLCTYEDALKAEANVEMPPVIIDGNLASVLPGLVTPQSKMLFTLLTIGSRGDVQPYISLGKALIEEGHRVRIATHSEFKDWIEGYGIEFKEVAGDPSELMKIMVDHGVFSVSFLRDAASKFRGWINELLASSWEACQGSDVLIESPSAMAGIHIAEALQIPYFRAFTMPWSRTRAYPHAFIVPDQKMGGSYNYLTYVMFDNVFWKGISGQVNRWRKKTLHLPRTNLDHMEQNKVPFLYNVSPAVLPPPVDFPDWIKITGYWFLDEGSKDYTPDDKLCRFMEKARNDGKKLVYIGFGSIVVSDPTALTKSVVESVLKADVRCILNKGWSDRLGKKDAKEPEIPLPEEVLQITNCPHDWLFPQIDACVHHGGSGTTGAGLRAGLPTIIKPFFGDQFFYANRVEDLGAGIHLRKLNVSQFSKALWEATHNERIIAKAAAVGRQIRSENGVISAIQAIYRDLDYARSLVQKKRGYTPTSDKEEETWTLVDDIERQMQDEVEKHNL.

The segment covering 60-70 has biased composition (acidic residues); it reads ESDEEDGDEVE. 2 disordered regions span residues 60–113 and 128–156; these read ESDE…SISH and LSPH…TQSE. A compositionally biased stretch (low complexity) spans 71–104; that stretch reads TPSTTTTAVSPSATMSAPSPTATAPTPHSGTHTP. Basic and acidic residues predominate over residues 137–146; that stretch reads SSHEASRRGS. The GRAM 1 domain occupies 200 to 247; the sequence is QKLKGFAALDVDEQLIADYPVWLLKNVLIQGHLYITAKHMCFLSYLPR. Residues 251-351 enclose the PH domain; sequence ANIRSGTLVK…WVKALQKEIF (101 aa). 2 disordered regions span residues 462 to 512 and 524 to 776; these read HSAH…PRLP and DKCD…QDTF. The segment covering 496–508 has biased composition (basic and acidic residues); it reads QPHERDEKRDSKL. The segment covering 556–567 has biased composition (polar residues); it reads LASQRTSSSTLF. Composition is skewed to low complexity over residues 576–606 and 647–676; these read SQPT…PASA and GGAT…SSPG. Positions 677–696 are enriched in gly residues; sequence TPGGLGGPGAVGAGGPGVMG. The span at 719–735 shows a compositional bias: low complexity; it reads APHDPAAAAAAADAAAP. In terms of domain architecture, GRAM 2 spans 827 to 893; sequence ERFQKRFALG…KVVENATKDS (67 aa). UDP-alpha-D-glucose-binding residues include Ser1004, Arg1005, Asp1007, Asn1279, Asn1307, His1310, His1323, Ser1326, Gly1327, Thr1328, Asp1347, and Gln1348.

The protein belongs to the glycosyltransferase 28 family.

It is found in the cytoplasm. It localises to the membrane. The catalysed reaction is a sterol + UDP-alpha-D-glucose = a sterol 3-beta-D-glucoside + UDP + H(+). The enzyme catalyses ergosterol + UDP-alpha-D-glucose = ergosteryl 3-beta-D-glucoside + UDP + H(+). In terms of biological role, sterol glycosyltransferase responsible for the glycosylation of ergosterol to form ergosterol-glucoside. This chain is Sterol 3-beta-glucosyltransferase, found in Yarrowia lipolytica (strain CLIB 122 / E 150) (Yeast).